Here is an 88-residue protein sequence, read N- to C-terminus: Histone H2A-beta, sperm (88 aa).

It belongs to the histone H2A family. In terms of assembly, the nucleosome is a histone octamer containing two molecules each of H2A, H2B, H3 and H4 assembled in one H3-H4 heterotetramer and two H2A-H2B heterodimers. The octamer wraps approximately 147 bp of DNA. Monoubiquitination in C-terminus gives a specific tag for epigenetic transcriptional repression.

The protein resides in the nucleus. Its subcellular location is the chromosome. Core component of nucleosome. Nucleosomes wrap and compact DNA into chromatin, limiting DNA accessibility to the cellular machineries which require DNA as a template. Histones thereby play a central role in transcription regulation, DNA repair, DNA replication and chromosomal stability. DNA accessibility is regulated via a complex set of post-translational modifications of histones, also called histone code, and nucleosome remodeling. This chain is Histone H2A-beta, sperm, found in Strongylocentrotus purpuratus (Purple sea urchin).